Here is a 491-residue protein sequence, read N- to C-terminus: Protein nucleotidyltransferase YdiU (491 aa).

ATP-binding residues include Gly-94, Gly-96, Arg-97, Lys-117, Asp-129, Gly-130, Arg-180, and Arg-187. The active-site Proton acceptor is the Asp-256. Mg(2+)-binding residues include Asn-257 and Asp-266. Asp-266 serves as a coordination point for ATP.

Belongs to the SELO family. Mg(2+) serves as cofactor. Mn(2+) is required as a cofactor.

It carries out the reaction L-seryl-[protein] + ATP = 3-O-(5'-adenylyl)-L-seryl-[protein] + diphosphate. The enzyme catalyses L-threonyl-[protein] + ATP = 3-O-(5'-adenylyl)-L-threonyl-[protein] + diphosphate. The catalysed reaction is L-tyrosyl-[protein] + ATP = O-(5'-adenylyl)-L-tyrosyl-[protein] + diphosphate. It catalyses the reaction L-histidyl-[protein] + UTP = N(tele)-(5'-uridylyl)-L-histidyl-[protein] + diphosphate. It carries out the reaction L-seryl-[protein] + UTP = O-(5'-uridylyl)-L-seryl-[protein] + diphosphate. The enzyme catalyses L-tyrosyl-[protein] + UTP = O-(5'-uridylyl)-L-tyrosyl-[protein] + diphosphate. Nucleotidyltransferase involved in the post-translational modification of proteins. It can catalyze the addition of adenosine monophosphate (AMP) or uridine monophosphate (UMP) to a protein, resulting in modifications known as AMPylation and UMPylation. The sequence is that of Protein nucleotidyltransferase YdiU from Bacillus cytotoxicus (strain DSM 22905 / CIP 110041 / 391-98 / NVH 391-98).